The chain runs to 120 residues: Large ribosomal subunit protein uL14 (120 aa).

It belongs to the universal ribosomal protein uL14 family. Part of the 50S ribosomal subunit. Forms a cluster with proteins L3 and L19. In the 70S ribosome, L14 and L19 interact and together make contacts with the 16S rRNA in bridges B5 and B8.

Binds to 23S rRNA. Forms part of two intersubunit bridges in the 70S ribosome. The polypeptide is Large ribosomal subunit protein uL14 (Karelsulcia muelleri (strain GWSS) (Sulcia muelleri)).